A 433-amino-acid chain; its full sequence is Nuclear distribution protein PAC1 (433 aa).

A LisH domain is found at 8–40; sequence QKDELHRAMLAYLHAAGMHNAYAALQHDAALAD. Positions 57 to 84 form a coiled coil; it reads SVIRLQKKVIDLENRNAALLAELAAAAR. 7 WD repeats span residues 103–144, 146–184, 188–227, 230–269, 272–336, 339–378, and 381–429; these read SHRA…RTLK, HTKA…TNVK, GHDH…CIKT, GHAE…TKME, GHEH…CLRT, GHDN…CTKT, and AHSH…QTIK.

The protein belongs to the WD repeat LIS1/nudF family. Self-associates. Interacts with NDL1 and dynein.

Its subcellular location is the cytoplasm. The protein resides in the cytoskeleton. It is found in the spindle pole. Functionally, positively regulates the activity of the minus-end directed microtubule motor protein dynein. Plays a central role in positioning the mitotic spindle at the bud neck during cell division. Targets cytoplasmic dynein to microtubule plus ends, thereby promoting dynein-mediated microtubule sliding along the bud cortex and consequently the movement of the mitotic spindle to the bud neck. In Cryptococcus neoformans var. neoformans serotype D (strain B-3501A) (Filobasidiella neoformans), this protein is Nuclear distribution protein PAC1.